The primary structure comprises 65 residues: Large ribosomal subunit protein bL35 (65 aa).

This sequence belongs to the bacterial ribosomal protein bL35 family.

The chain is Large ribosomal subunit protein bL35 from Porphyromonas gingivalis (strain ATCC 33277 / DSM 20709 / CIP 103683 / JCM 12257 / NCTC 11834 / 2561).